We begin with the raw amino-acid sequence, 84 residues long: MVFAYVLVSGFMLVLGIKYGRTKIYSVWKAGLIILAGFAVIFAAAWIAFTGTSASQERIGLAKSLSVVMGLIAGVLSVYVLSKS.

A run of 3 helical transmembrane segments spans residues 4-20 (AYVL…IKYG), 27-49 (VWKA…WIAF), and 59-81 (IGLA…VYVL).

Its subcellular location is the cell membrane. This is an uncharacterized protein from Archaeoglobus fulgidus (strain ATCC 49558 / DSM 4304 / JCM 9628 / NBRC 100126 / VC-16).